The chain runs to 363 residues: Tetraacyldisaccharide 4'-kinase (363 aa).

78-85 is a binding site for ATP; the sequence is TVGGNGKT.

The protein belongs to the LpxK family.

The enzyme catalyses a lipid A disaccharide + ATP = a lipid IVA + ADP + H(+). Its pathway is glycolipid biosynthesis; lipid IV(A) biosynthesis; lipid IV(A) from (3R)-3-hydroxytetradecanoyl-[acyl-carrier-protein] and UDP-N-acetyl-alpha-D-glucosamine: step 6/6. Transfers the gamma-phosphate of ATP to the 4'-position of a tetraacyldisaccharide 1-phosphate intermediate (termed DS-1-P) to form tetraacyldisaccharide 1,4'-bis-phosphate (lipid IVA). The sequence is that of Tetraacyldisaccharide 4'-kinase from Wigglesworthia glossinidia brevipalpis.